The sequence spans 898 residues: Pyruvate, phosphate dikinase (898 aa).

The interval methionine 1 to lysine 355 is N-terminal. Arginine 96 provides a ligand contact to ATP. The tract at residues arginine 356–serine 412 is linker 1. Positions proline 413–isoleucine 511 are central. Threonine 466 is subject to Phosphothreonine; by PDRP1. Histidine 468 serves as the catalytic Tele-phosphohistidine intermediate. A linker 2 region spans residues aspartate 512–arginine 546. Positions methionine 547–serine 898 are C-terminal. Substrate-binding residues include arginine 574, arginine 630, glutamate 758, glycine 779, threonine 780, asparagine 781, and aspartate 782. Glutamate 758 contributes to the Mg(2+) binding site. Residue aspartate 782 coordinates Mg(2+). Residue cysteine 844 is the Proton donor of the active site.

Belongs to the PEP-utilizing enzyme family. In terms of assembly, homodimer. Mg(2+) is required as a cofactor. Phosphorylation of Thr-466 in the dark inactivates the enzyme. Dephosphorylation upon light stimulation reactivates the enzyme.

The enzyme catalyses pyruvate + phosphate + ATP = phosphoenolpyruvate + AMP + diphosphate + H(+). Its activity is regulated as follows. Activated by light-induced dephosphorylation. Inhibited by dark-induced phosphorylation. Both reactions are catalyzed by PDRP1. Functionally, catalyzes the reversible phosphorylation of pyruvate and phosphate. This Rhizobium meliloti (strain 1021) (Ensifer meliloti) protein is Pyruvate, phosphate dikinase (ppdK).